Consider the following 607-residue polypeptide: UvrABC system protein C (607 aa).

The GIY-YIG domain occupies 19–97 (TLSGVYQMRD…IKQYQPKFNI (79 aa)). Residues 205–240 (EHLLQTLTEHMLQASAAQQYERAAIVRDQISELRTI) form the UVR domain.

Belongs to the UvrC family. As to quaternary structure, interacts with UvrB in an incision complex.

Its subcellular location is the cytoplasm. The UvrABC repair system catalyzes the recognition and processing of DNA lesions. UvrC both incises the 5' and 3' sides of the lesion. The N-terminal half is responsible for the 3' incision and the C-terminal half is responsible for the 5' incision. The protein is UvrABC system protein C of Dichelobacter nodosus (strain VCS1703A).